Here is a 111-residue protein sequence, read N- to C-terminus: Ribosome-binding factor A (111 aa).

Belongs to the RbfA family. As to quaternary structure, monomer. Binds 30S ribosomal subunits, but not 50S ribosomal subunits or 70S ribosomes.

It localises to the cytoplasm. Functionally, one of several proteins that assist in the late maturation steps of the functional core of the 30S ribosomal subunit. Associates with free 30S ribosomal subunits (but not with 30S subunits that are part of 70S ribosomes or polysomes). Required for efficient processing of 16S rRNA. May interact with the 5'-terminal helix region of 16S rRNA. This is Ribosome-binding factor A from Helicobacter pylori (strain P12).